The sequence spans 394 residues: Ornithine aminotransferase 1 (394 aa).

The residue at position 252 (lysine 252) is an N6-(pyridoxal phosphate)lysine.

It belongs to the class-III pyridoxal-phosphate-dependent aminotransferase family. OAT subfamily. Requires pyridoxal 5'-phosphate as cofactor.

Its subcellular location is the cytoplasm. It catalyses the reaction a 2-oxocarboxylate + L-ornithine = L-glutamate 5-semialdehyde + an L-alpha-amino acid. The protein operates within amino-acid biosynthesis; L-proline biosynthesis; L-glutamate 5-semialdehyde from L-ornithine: step 1/1. Functionally, catalyzes the interconversion of ornithine to glutamate semialdehyde. The polypeptide is Ornithine aminotransferase 1 (Staphylococcus saprophyticus subsp. saprophyticus (strain ATCC 15305 / DSM 20229 / NCIMB 8711 / NCTC 7292 / S-41)).